We begin with the raw amino-acid sequence, 445 residues long: Tubulin beta-2 chain (445 aa).

GTP-binding residues include Q11, E69, S138, G142, T143, G144, N204, and N226. Mg(2+) is bound at residue E69. A disordered region spans residues 424–445 (QYQDATAEDEGEFDEDEEVEEA). The segment covering 429 to 445 (TAEDEGEFDEDEEVEEA) has biased composition (acidic residues).

This sequence belongs to the tubulin family. Dimer of alpha and beta chains. A typical microtubule is a hollow water-filled tube with an outer diameter of 25 nm and an inner diameter of 15 nM. Alpha-beta heterodimers associate head-to-tail to form protofilaments running lengthwise along the microtubule wall with the beta-tubulin subunit facing the microtubule plus end conferring a structural polarity. Microtubules usually have 13 protofilaments but different protofilament numbers can be found in some organisms and specialized cells. It depends on Mg(2+) as a cofactor.

The protein resides in the cytoplasm. Its subcellular location is the cytoskeleton. Tubulin is the major constituent of microtubules, a cylinder consisting of laterally associated linear protofilaments composed of alpha- and beta-tubulin heterodimers. Microtubules grow by the addition of GTP-tubulin dimers to the microtubule end, where a stabilizing cap forms. Below the cap, tubulin dimers are in GDP-bound state, owing to GTPase activity of alpha-tubulin. This Echinococcus multilocularis (Fox tapeworm) protein is Tubulin beta-2 chain (TUB-2).